The following is a 229-amino-acid chain: Homeobox-leucine zipper protein HOX3 (229 aa).

The interval 1 to 82 is disordered; the sequence is MMGATSPSGL…GPHRPKKLRL (82 aa). Residues 52–68 are compositionally biased toward acidic residues; sequence GEEEEFPMGSVEEDEEE. Residues 75–134 constitute a DNA-binding region (homeobox); sequence HRPKKLRLSKEQSRLLEESFRLNHTLTPKQKEALAIKLKLRPRQVEVWFQNRRARTKLKQ. Residues 133-177 are leucine-zipper; the sequence is KQTEMECEYLKRCFGSLTEENRRLQREVEELRAMRVAPPTVLSPH. The segment at 198 to 229 is disordered; it reads AATGPPAVRPPPSSAAAAAPSPFHPRRPSAAF.

This sequence belongs to the HD-ZIP homeobox family. Class II subfamily. Homodimer. May form a heterodimer with HOX1, HOX2 or HOX7. As to expression, expressed in seedlings, roots, leaves, nodes, internodes, flowers and embryo.

It localises to the nucleus. In terms of biological role, probable transcription repressor that binds to the DNA sequence 5'-CAAT[GC]ATTG-3'. This Oryza sativa subsp. indica (Rice) protein is Homeobox-leucine zipper protein HOX3 (HOX3).